A 152-amino-acid polypeptide reads, in one-letter code: Globin-1 subunit beta (152 aa).

Ser-2 is modified (N-acetylserine). Residues 12 to 152 (VSNADQKDLL…SLVAVVQAAL (141 aa)) enclose the Globin domain. Positions 72 and 104 each coordinate heme b.

It belongs to the globin family. In terms of assembly, heterotetramer of two alpha chains and two beta chains.

The chain is Globin-1 subunit beta from Anadara trapezia (Sydney cockle).